Here is a 239-residue protein sequence, read N- to C-terminus: 1-(5-phosphoribosyl)-5-[(5-phosphoribosylamino)methylideneamino] imidazole-4-carboxamide isomerase (239 aa).

The active-site Proton acceptor is Asp-8. Asp-129 (proton donor) is an active-site residue.

This sequence belongs to the HisA/HisF family.

It is found in the cytoplasm. It catalyses the reaction 1-(5-phospho-beta-D-ribosyl)-5-[(5-phospho-beta-D-ribosylamino)methylideneamino]imidazole-4-carboxamide = 5-[(5-phospho-1-deoxy-D-ribulos-1-ylimino)methylamino]-1-(5-phospho-beta-D-ribosyl)imidazole-4-carboxamide. The protein operates within amino-acid biosynthesis; L-histidine biosynthesis; L-histidine from 5-phospho-alpha-D-ribose 1-diphosphate: step 4/9. The chain is 1-(5-phosphoribosyl)-5-[(5-phosphoribosylamino)methylideneamino] imidazole-4-carboxamide isomerase from Bacillus cereus (strain Q1).